A 131-amino-acid polypeptide reads, in one-letter code: Large ribosomal subunit protein bL17 (131 aa).

The protein belongs to the bacterial ribosomal protein bL17 family. In terms of assembly, part of the 50S ribosomal subunit. Contacts protein L32.

The sequence is that of Large ribosomal subunit protein bL17 from Oenococcus oeni (strain ATCC BAA-331 / PSU-1).